A 101-amino-acid chain; its full sequence is NAD(P)H-quinone oxidoreductase subunit 4L, chloroplastic (101 aa).

The next 2 membrane-spanning stretches (helical) occupy residues 2-22 (MFEH…YGLI) and 61-81 (IFSI…LAIV).

It belongs to the complex I subunit 4L family. In terms of assembly, NDH is composed of at least 16 different subunits, 5 of which are encoded in the nucleus.

Its subcellular location is the plastid. The protein resides in the chloroplast thylakoid membrane. The enzyme catalyses a plastoquinone + NADH + (n+1) H(+)(in) = a plastoquinol + NAD(+) + n H(+)(out). It carries out the reaction a plastoquinone + NADPH + (n+1) H(+)(in) = a plastoquinol + NADP(+) + n H(+)(out). Functionally, NDH shuttles electrons from NAD(P)H:plastoquinone, via FMN and iron-sulfur (Fe-S) centers, to quinones in the photosynthetic chain and possibly in a chloroplast respiratory chain. The immediate electron acceptor for the enzyme in this species is believed to be plastoquinone. Couples the redox reaction to proton translocation, and thus conserves the redox energy in a proton gradient. This Dioscorea elephantipes (Elephant's foot yam) protein is NAD(P)H-quinone oxidoreductase subunit 4L, chloroplastic.